The chain runs to 280 residues: Acetyl-coenzyme A carboxylase carboxyl transferase subunit beta (280 aa).

Residues 26–280 (LWQKCPRCGE…TKLLAWHSQK (255 aa)) form the CoA carboxyltransferase N-terminal domain. Zn(2+) is bound by residues Cys-30, Cys-33, Cys-49, and Cys-52. The C4-type zinc-finger motif lies at 30–52 (CPRCGEIIFNKELEKNFKVCPKC).

This sequence belongs to the AccD/PCCB family. Acetyl-CoA carboxylase is a heterohexamer composed of biotin carboxyl carrier protein (AccB), biotin carboxylase (AccC) and two subunits each of ACCase subunit alpha (AccA) and ACCase subunit beta (AccD). Zn(2+) serves as cofactor.

The protein localises to the cytoplasm. It carries out the reaction N(6)-carboxybiotinyl-L-lysyl-[protein] + acetyl-CoA = N(6)-biotinyl-L-lysyl-[protein] + malonyl-CoA. Its pathway is lipid metabolism; malonyl-CoA biosynthesis; malonyl-CoA from acetyl-CoA: step 1/1. Its function is as follows. Component of the acetyl coenzyme A carboxylase (ACC) complex. Biotin carboxylase (BC) catalyzes the carboxylation of biotin on its carrier protein (BCCP) and then the CO(2) group is transferred by the transcarboxylase to acetyl-CoA to form malonyl-CoA. This chain is Acetyl-coenzyme A carboxylase carboxyl transferase subunit beta, found in Carboxydothermus hydrogenoformans (strain ATCC BAA-161 / DSM 6008 / Z-2901).